A 547-amino-acid chain; its full sequence is MAFQDLLDQVGGLGRFQILQMVFLIMFNVIVYHQTQLENFAAFILDHRCWVHILDNDTIPDNDPGTLSQDALLRISIPFDSNLRPEKCRRFVHPQWKLIHLNGTFPNTSEPDTEPCVDGWVYDQSSFPSTIVTKWDLVCESQPLNSVAKFLFMAGMMVGGNLYGHLSDRFGRKFVLRWSYLQLAIVGTCAAFAPTILVYCSLRFLAGAATFSIIVNTVLLIVEWITHQFCAMALTLTLCAASIGHITLGSLAFVIRDQCILQLVMSAPCFVFFLFSRWLAESARWLIINNKPEEGLKELRKAAHRNGMKNAEDILTMEVLKSTMKQELEAAQKKHSLCELLRIPNICKRICFLSFVRFASTIPFWGLTLHLQHLGNNVFLLQTLFGAVTLLANCVAPWALNHMSRRLSQMLLMFLLATCLLAIIFVPQEMQTLRVVLATLGVGAASLGITCSTAQENELIPSIIRGRATGITGNFANIGGALASLMMILSIYSRPLPWIIYGVFAILSGLVVLLLPETRNQPLLDSIQDVENEGVNSLAAPQRSSVL.

Residues 1 to 9 (MAFQDLLDQ) are Cytoplasmic-facing. A helical transmembrane segment spans residues 10–30 (VGGLGRFQILQMVFLIMFNVI). At 31–145 (VYHQTQLENF…DLVCESQPLN (115 aa)) the chain is on the extracellular side. N-linked (GlcNAc...) asparagine glycans are attached at residues asparagine 56 and asparagine 102. The chain crosses the membrane as a helical span at residues 146–166 (SVAKFLFMAGMMVGGNLYGHL). At 167–177 (SDRFGRKFVLR) the chain is on the cytoplasmic side. The helical transmembrane segment at 178–198 (WSYLQLAIVGTCAAFAPTILV) threads the bilayer. Topologically, residues 199–204 (YCSLRF) are extracellular. A helical membrane pass occupies residues 205-225 (LAGAATFSIIVNTVLLIVEWI). The Cytoplasmic portion of the chain corresponds to 226–234 (THQFCAMAL). Residues 235–255 (TLTLCAASIGHITLGSLAFVI) form a helical membrane-spanning segment. Residues 256–259 (RDQC) lie on the Extracellular side of the membrane. Residues 260–280 (ILQLVMSAPCFVFFLFSRWLA) form a helical membrane-spanning segment. Residues 281–349 (ESARWLIINN…LLRIPNICKR (69 aa)) are Cytoplasmic-facing. A helical membrane pass occupies residues 350-370 (ICFLSFVRFASTIPFWGLTLH). The Extracellular portion of the chain corresponds to 371–377 (LQHLGNN). A helical transmembrane segment spans residues 378–398 (VFLLQTLFGAVTLLANCVAPW). At 399–406 (ALNHMSRR) the chain is on the cytoplasmic side. The helical transmembrane segment at 407–427 (LSQMLLMFLLATCLLAIIFVP) threads the bilayer. Over 428–434 (QEMQTLR) the chain is Extracellular. The helical transmembrane segment at 435–455 (VVLATLGVGAASLGITCSTAQ) threads the bilayer. The Cytoplasmic segment spans residues 456 to 470 (ENELIPSIIRGRATG). The helical transmembrane segment at 471 to 491 (ITGNFANIGGALASLMMILSI) threads the bilayer. Residues 492–494 (YSR) are Extracellular-facing. Residues 495–515 (PLPWIIYGVFAILSGLVVLLL) form a helical membrane-spanning segment. At 516–547 (PETRNQPLLDSIQDVENEGVNSLAAPQRSSVL) the chain is on the cytoplasmic side.

This sequence belongs to the major facilitator (TC 2.A.1) superfamily. Organic cation transporter (TC 2.A.1.19) family. Expressed exclusively in liver in both embryo and adult.

The protein resides in the membrane. The sequence is that of Solute carrier family 22 member 25 from Homo sapiens (Human).